Reading from the N-terminus, the 191-residue chain is Fe/S biogenesis protein NfuA (191 aa).

[4Fe-4S] cluster-binding residues include Cys-149 and Cys-152.

The protein belongs to the NfuA family. In terms of assembly, homodimer. [4Fe-4S] cluster is required as a cofactor.

Functionally, involved in iron-sulfur cluster biogenesis. Binds a 4Fe-4S cluster, can transfer this cluster to apoproteins, and thereby intervenes in the maturation of Fe/S proteins. Could also act as a scaffold/chaperone for damaged Fe/S proteins. In Sodalis glossinidius (strain morsitans), this protein is Fe/S biogenesis protein NfuA.